Reading from the N-terminus, the 860-residue chain is Leucine--tRNA ligase (860 aa).

The 'HIGH' region motif lies at 42–52 (PYPSGRLHMGH). The short motif at 619-623 (KMSKS) is the 'KMSKS' region element. Residue lysine 622 coordinates ATP.

This sequence belongs to the class-I aminoacyl-tRNA synthetase family.

Its subcellular location is the cytoplasm. It catalyses the reaction tRNA(Leu) + L-leucine + ATP = L-leucyl-tRNA(Leu) + AMP + diphosphate. This Escherichia coli O6:K15:H31 (strain 536 / UPEC) protein is Leucine--tRNA ligase.